The sequence spans 304 residues: Undecaprenyl-diphosphatase (304 aa).

The next 7 membrane-spanning stretches (helical) occupy residues 1-21 (MSLL…FLPV), 54-74 (TTLA…AAGL), 90-110 (LAWF…LFEE), 114-134 (ALGN…LLAA), 192-212 (FLLS…KTVP), 225-245 (LVGT…LLGW), and 253-273 (LFVV…WQGV).

The protein belongs to the UppP family.

The protein resides in the cell inner membrane. It carries out the reaction di-trans,octa-cis-undecaprenyl diphosphate + H2O = di-trans,octa-cis-undecaprenyl phosphate + phosphate + H(+). Catalyzes the dephosphorylation of undecaprenyl diphosphate (UPP). Confers resistance to bacitracin. The chain is Undecaprenyl-diphosphatase from Anaeromyxobacter sp. (strain Fw109-5).